The chain runs to 143 residues: Large-conductance mechanosensitive channel (143 aa).

2 helical membrane passes run 10-30 and 89-109; these read FAVK…GAFS and GSFI…FLMV.

This sequence belongs to the MscL family. In terms of assembly, homopentamer.

Its subcellular location is the cell inner membrane. In terms of biological role, channel that opens in response to stretch forces in the membrane lipid bilayer. May participate in the regulation of osmotic pressure changes within the cell. The polypeptide is Large-conductance mechanosensitive channel (Burkholderia cenocepacia (strain HI2424)).